The following is a 476-amino-acid chain: S-adenosylmethionine-dependent nucleotide dehydratase (476 aa).

The segment at 1 to 168 is cytidylate kinase-like domain; that stretch reads MKTKITLSGF…LTANEVADLI (168 aa). ATP is bound at residue 9-17; that stretch reads GFAGTGKST. Positions 176-400 constitute a Radical SAM core domain; the sequence is NAVSKIPSVN…HKDVETIVPE (225 aa). Residues 183–476 form a prokaryotic viperin domain region; it reads SVNFHLWQPC…DLRKEEVSYE (294 aa). [4Fe-4S] cluster-binding residues include Cys-192, Cys-196, and Cys-199.

This sequence in the N-terminal section; belongs to the cytidylate kinase-like family. The protein in the C-terminal section; belongs to the radical SAM superfamily. Viperin family. [4Fe-4S] cluster serves as cofactor.

It carries out the reaction GTP + AH2 + S-adenosyl-L-methionine = 3'-deoxy-3',4'-didehydro-GTP + 5'-deoxyadenosine + L-methionine + A + H2O + H(+). Its function is as follows. Expression of pVip60 in E.coli (strain MG1655) confers resistance to phage T7; prevents culture collapse upon infection. Catalyzes the conversion of guanosine triphosphate (GTP) to 3'-deoxy-3',4'-didehydro-GTP (ddhGTP), probably via a SAM-dependent radical mechanism. The modified nucleotide represses transcription from T7 RNA polymerase-directed genes (possibly by acting as chain terminators), strongly suggesting these nucleotides block viral polymerase transcription. In terms of biological role, the N-terminus of the protein may generate NTP for use by the viperin domain. This Lacinutrix mariniflava (strain JCM 13824 / KCCM 42306 / AKS432) protein is S-adenosylmethionine-dependent nucleotide dehydratase.